The primary structure comprises 122 residues: Single-stranded DNA-binding protein (122 aa).

The protein belongs to the phi29likevirus single-strand-binding protein family. Monomer.

Its function is as follows. Single-stranded DNA binding protein required for the elongation during viral DNA replication by strand displacement. Displaced viral DNA strands are transiently coated with the ssDNA-binding protein and therefore protected againt nucleases. The latter is then probably removed by the replisome that performs lagging strand synthesis or during the events that lead up to the recombination process. Has helix-destabilizing activity since it removes secondary structure from the ssDNA in replicative intermediates. This Bacillus subtilis (Bacteriophage B103) protein is Single-stranded DNA-binding protein (5).